The sequence spans 212 residues: Octanoyltransferase (212 aa).

In terms of domain architecture, BPL/LPL catalytic spans 34–208 (GQRQDTLILL…AFERQFNARC (175 aa)). Substrate contacts are provided by residues 72–79 (RGGQVTYH), 139–141 (SIG), and 152–154 (GLS). Residue Cys170 is the Acyl-thioester intermediate of the active site.

This sequence belongs to the LipB family.

The protein localises to the cytoplasm. The catalysed reaction is octanoyl-[ACP] + L-lysyl-[protein] = N(6)-octanoyl-L-lysyl-[protein] + holo-[ACP] + H(+). The protein operates within protein modification; protein lipoylation via endogenous pathway; protein N(6)-(lipoyl)lysine from octanoyl-[acyl-carrier-protein]: step 1/2. Its function is as follows. Catalyzes the transfer of endogenously produced octanoic acid from octanoyl-acyl-carrier-protein onto the lipoyl domains of lipoate-dependent enzymes. Lipoyl-ACP can also act as a substrate although octanoyl-ACP is likely to be the physiological substrate. The polypeptide is Octanoyltransferase (Magnetococcus marinus (strain ATCC BAA-1437 / JCM 17883 / MC-1)).